The following is a 458-amino-acid chain: Retinoic acid receptor gamma (458 aa).

A modulating region spans residues 1 to 89 (MATNKERLFA…PPPPPRVYKP (89 aa)). Arg-34 carries the post-translational modification Omega-N-methylarginine. The segment at 58–83 (MASLSVETQSTSSEEMVPSSPSPPPP) is disordered. The span at 62 to 71 (SVETQSTSSE) shows a compositional bias: polar residues. NR C4-type zinc fingers lie at residues 90 to 110 (CFVC…CEGC) and 126 to 150 (CHRD…LQKC). The segment at residues 90–155 (CFVCNDKSSG…RLQKCFEVGM (66 aa)) is a DNA-binding region (nuclear receptor). The tract at residues 156-184 (SKEAVRNDRNKKKKEVKEEGSPDSYELSP) is hinge. The interval 161 to 180 (RNDRNKKKKEVKEEGSPDSY) is disordered. Residues Lys-172 and Lys-401 each participate in a glycyl lysine isopeptide (Lys-Gly) (interchain with G-Cter in SUMO2) cross-link. The region spanning 185–419 (QLEELITKVS…PLIREMLENP (235 aa)) is the NR LBD domain. The tract at residues 409 to 458 (PPLIREMLENPEMFEDDSSKPGPHPKASSEDEAPGGQGKRGQSPQPDQGP) is disordered. Polar residues predominate over residues 448-458 (RGQSPQPDQGP).

This sequence belongs to the nuclear hormone receptor family. NR1 subfamily. Homodimer. Heterodimer with a RXR molecule. Binds DNA preferentially as a RAR/RXR heterodimer. Forms a complex with PUS1 and the SRA1 RNA in the nucleus.

The protein resides in the nucleus. Its subcellular location is the cytoplasm. Functionally, receptor for retinoic acid. Retinoic acid receptors bind as heterodimers to their target response elements in response to their ligands, all-trans or 9-cis retinoic acid, and regulate gene expression in various biological processes. The RAR/RXR heterodimers bind to the retinoic acid response elements (RARE) composed of tandem 5'-AGGTCA-3' sites known as DR1-DR5. In the absence of ligand, acts mainly as an activator of gene expression due to weak binding to corepressors. Required for limb bud development. In concert with RARA or RARB, required for skeletal growth, matrix homeostasis and growth plate function. The polypeptide is Retinoic acid receptor gamma (Rarg) (Mus musculus (Mouse)).